Here is a 94-residue protein sequence, read N- to C-terminus: Large ribosomal subunit protein bL25 (94 aa).

The tract at residues 1–20 (MFKFNAEVRQSQGKGASRRL) is disordered.

This sequence belongs to the bacterial ribosomal protein bL25 family. Part of the 50S ribosomal subunit; part of the 5S rRNA/L5/L18/L25 subcomplex. Contacts the 5S rRNA. Binds to the 5S rRNA independently of L5 and L18.

This is one of the proteins that binds to the 5S RNA in the ribosome where it forms part of the central protuberance. The protein is Large ribosomal subunit protein bL25 of Pasteurella multocida (strain Pm70).